The sequence spans 98 residues: Venom toxin OcyC11 (98 aa).

The first 20 residues, 1 to 20 (MKIACTLVLFVMLRCYVNAR), serve as a signal peptide directing secretion.

Contains 4 disulfide bonds. Expressed by the venom gland.

Its subcellular location is the secreted. In Opisthacanthus cayaporum (South American scorpion), this protein is Venom toxin OcyC11.